Reading from the N-terminus, the 81-residue chain is Cytotoxin 4N (81 aa).

The first 21 residues, 1–21 (MKTLLLTLVVVTIVCLDLGYT), serve as a signal peptide directing secretion. Cystine bridges form between cysteine 24–cysteine 42, cysteine 35–cysteine 59, cysteine 63–cysteine 74, and cysteine 75–cysteine 80.

The protein belongs to the three-finger toxin family. Short-chain subfamily. Type IA cytotoxin sub-subfamily. Monomer in solution; Homodimer and oligomer in the presence of negatively charged lipids forming a pore with a size ranging between 20 and 30 Angstroms. In terms of tissue distribution, expressed by the venom gland.

The protein localises to the secreted. It localises to the target cell membrane. Its function is as follows. Shows cytolytic activity on many different cells by forming pore in lipid membranes. In vivo, increases heart rate or kills the animal by cardiac arrest. In addition, it binds to heparin with high affinity, interacts with Kv channel-interacting protein 1 (KCNIP1) in a calcium-independent manner, and binds to integrin alpha-V/beta-3 (ITGAV/ITGB3) with moderate affinity. The polypeptide is Cytotoxin 4N (Naja atra (Chinese cobra)).